The following is a 224-amino-acid chain: UPF0758 protein Hhal_2301 (224 aa).

One can recognise an MPN domain in the interval 102 to 224 (TLSSPAQTRT…PVSLAERGVL (123 aa)). Residues His-173, His-175, and Asp-186 each coordinate Zn(2+). Residues 173-186 (HNHPSGITEPSAAD) carry the JAMM motif motif.

Belongs to the UPF0758 family.

In Halorhodospira halophila (strain DSM 244 / SL1) (Ectothiorhodospira halophila (strain DSM 244 / SL1)), this protein is UPF0758 protein Hhal_2301.